The following is a 423-amino-acid chain: Adenylosuccinate synthetase (423 aa).

Residues 13–19 (GDEGKGK) and 41–43 (GHT) contribute to the GTP site. D14 (proton acceptor) is an active-site residue. The Mg(2+) site is built by D14 and G41. Residues 14-17 (DEGK), 39-42 (NAGH), T130, R144, Q223, T238, and R302 contribute to the IMP site. H42 serves as the catalytic Proton donor. 298 to 304 (SVTGRKR) provides a ligand contact to substrate. GTP-binding positions include R304 and 410–412 (SVG).

The protein belongs to the adenylosuccinate synthetase family. As to quaternary structure, homodimer. Mg(2+) is required as a cofactor.

It localises to the cytoplasm. The enzyme catalyses IMP + L-aspartate + GTP = N(6)-(1,2-dicarboxyethyl)-AMP + GDP + phosphate + 2 H(+). It functions in the pathway purine metabolism; AMP biosynthesis via de novo pathway; AMP from IMP: step 1/2. Plays an important role in the de novo pathway of purine nucleotide biosynthesis. Catalyzes the first committed step in the biosynthesis of AMP from IMP. This Porphyromonas gingivalis (strain ATCC BAA-308 / W83) protein is Adenylosuccinate synthetase.